The following is a 427-amino-acid chain: Ceramide Synthase FUM18 (427 aa).

The N-linked (GlcNAc...) asparagine glycan is linked to Asn-20. The next 6 membrane-spanning stretches (helical) occupy residues 38 to 58, 131 to 151, 173 to 193, 202 to 222, 250 to 270, and 335 to 355; these read ILPLLTGFTLLAGVILLIHIS, EQGWILMYYSVFWPLGMLIWA, GLIKFYILTQLAYWIQQVISV, YWLNVVHHFITITLILLCYVY, YLGFTTLCDLVFFLFFVTWIV, and VSILAYLLLLQVLMMIWFGFI. Positions 124–364 constitute a TLC domain; sequence RKVVRFSEQG…ICKVAIGVLD (241 aa). The disordered stretch occupies residues 373-406; sequence SDVESDEEDSEPVANGSGWQQSQLQPGRRVGSNG. A glycan (N-linked (GlcNAc...) asparagine) is linked at Asn-387.

It belongs to the sphingosine N-acyltransferase family.

It is found in the endoplasmic reticulum membrane. Its pathway is mycotoxin biosynthesis. In terms of biological role, ceramide synthase; part of the gene cluster that mediates the biosynthesis of fumonisins B1 (FB1), B2 (FB2), B3 (FB3), and B4 (FB4), which are carcinogenic mycotoxins. Plays a role in self-protection from FB1 toxicity by contributing to ceramide synthesis. The biosynthesis starts with the FUM1-catalyzed carbon chain assembly from one molecule of acetyl-CoA, eight molecules of malonyl-CoA, and two molecules of methionine (in S-adenosyl form). The C18 polyketide chain is released from the enzyme by a nucleophilic attack of a carbanion, which is derived from R-carbon of alanine by decarboxylation, on the carbonyl carbon of polyketide acyl chain. This step is catalyzed by the pyridoxal 5'-phosphate-dependent aminoacyl transferase FUM8. The resultant 3-keto intermediate is then stereospecifically reduced to a 3-hydroxyl product by reductase FUM13. Subsequent oxidations at C-10 by the cytochrome P450 monooxygenase FUM2, C-14 and C-15 by FUM6, FUM12 or FUM15, tricarballylic esterification of the hydroxyl groups on C-14 and C-15 by acyltransferase FUM14, and C-5 hydroxylation by 2-keto-glutarate-dependent dioxygenase FUM3 furnish the biosynthesis of fumonisins. The tricarballylic moieties are most likely derived from the citric acid cycle, and their addition to the carbon backbone may involve FUM7, FUM10, FUM11 and FUM14. The chain is Ceramide Synthase FUM18 from Gibberella moniliformis (strain M3125 / FGSC 7600) (Maize ear and stalk rot fungus).